Here is a 3790-residue protein sequence, read N- to C-terminus: Transcription-associated protein 1 (3790 aa).

HEAT repeat units follow at residues 98–136 (RQHV…HFRP), 335–381 (TDLR…HVRQ), 740–778 (DLLY…ELCL), 1185–1223 (AKAT…IQSK), 1332–1370 (IGYK…GVTL), and 1826–1864 (AIHK…AMPL). Positions 2610–3173 (LLAYLGKSHN…YFPIRTLYLT (564 aa)) constitute an FAT domain. The PI3K/PI4K catalytic domain maps to 3429-3753 (MPRVEIVQKN…AVDIIMTRFN (325 aa)). A G-loop region spans residues 3435-3441 (VQKNNTA). Residues 3616-3624 (NLTRLNADM) are catalytic loop. The interval 3636–3661 (ISYFKFDVNDDKCQLNQHRPVPFRLT) is activation loop. Positions 3758-3790 (FDSIENKKISVLVQSATNIDNLCRMDPAWHPWL) constitute an FATC domain.

The protein belongs to the PI3/PI4-kinase family. TRA1 subfamily. Component of the Tip60 chromatin-remodeling complex which contains the catalytic subunit Tip60 and the subunits Domino, Tra1, Brd8, E(Pc), DMAP1, Pontin, Reptin, Ing3, Act87E, BAP55, Mrg15, MrgBP, Gas41 and YL-1. Probable component of some SAGA complex. Interacts with Spt3, Gcn5, Ada3 and Ada2b. As to expression, ubiquitous.

It localises to the nucleus. The protein localises to the cytoplasm. The protein resides in the chromosome. Its function is as follows. Part of the Tip60 chromatin-remodeling complex which is involved in DNA repair. Upon induction of DNA double-strand breaks, this complex acetylates phosphorylated H2AV in nucleosomes and exchanges it with unmodified H2AV. During wing development, required for activity of Notch and its coactivator mam. Function in promoting mam function is likely to involve both the Tip60 and SAGA complexes. This Drosophila melanogaster (Fruit fly) protein is Transcription-associated protein 1 (Nipped-A).